The following is a 147-amino-acid chain: Large ribosomal subunit protein bL9 (147 aa).

Belongs to the bacterial ribosomal protein bL9 family.

Binds to the 23S rRNA. The polypeptide is Large ribosomal subunit protein bL9 (Myxococcus xanthus (strain DK1622)).